The sequence spans 754 residues: uncharacterized protein (754 aa).

Transmembrane regions (helical) follow at residues 3-23 (ITTV…LPQL), 24-44 (PGTL…FIPV), 50-70 (IALT…ILWA), 223-243 (HLMA…AGLI), 254-274 (WIHW…YAWL), 320-340 (VAIL…LIFW), 370-390 (LLLM…SFIA), 392-412 (LLAI…AMVV), 446-466 (WINI…LLVV), and 471-491 (AWRT…WPLW).

To B.subtilis ComEC, N.gonorrhoeae ComA, and H.influenzae Rec2.

It localises to the cell membrane. This is an uncharacterized protein from Escherichia coli (strain K12).